We begin with the raw amino-acid sequence, 67 residues long: ATP synthase F(0) complex subunit 8 (67 aa).

Residues 8 to 24 (TWLIMILSMILTLFITF) form a helical membrane-spanning segment. At lysine 54 the chain carries N6-acetyllysine; alternate. Lysine 54 carries the post-translational modification N6-succinyllysine; alternate. An N6-acetyllysine modification is found at lysine 57.

This sequence belongs to the ATPase protein 8 family. Component of the ATP synthase complex composed at least of ATP5F1A/subunit alpha, ATP5F1B/subunit beta, ATP5MC1/subunit c (homooctomer), MT-ATP6/subunit a, MT-ATP8/subunit 8, ATP5ME/subunit e, ATP5MF/subunit f, ATP5MG/subunit g, ATP5MK/subunit k, ATP5MJ/subunit j, ATP5F1C/subunit gamma, ATP5F1D/subunit delta, ATP5F1E/subunit epsilon, ATP5PF/subunit F6, ATP5PB/subunit b, ATP5PD/subunit d, ATP5PO/subunit OSCP. ATP synthase complex consists of a soluble F(1) head domain (subunits alpha(3) and beta(3)) - the catalytic core - and a membrane F(0) domain - the membrane proton channel (subunits c, a, 8, e, f, g, k and j). These two domains are linked by a central stalk (subunits gamma, delta, and epsilon) rotating inside the F1 region and a stationary peripheral stalk (subunits F6, b, d, and OSCP). Interacts with PRICKLE3.

The protein resides in the mitochondrion membrane. In terms of biological role, subunit 8, of the mitochondrial membrane ATP synthase complex (F(1)F(0) ATP synthase or Complex V) that produces ATP from ADP in the presence of a proton gradient across the membrane which is generated by electron transport complexes of the respiratory chain. ATP synthase complex consist of a soluble F(1) head domain - the catalytic core - and a membrane F(1) domain - the membrane proton channel. These two domains are linked by a central stalk rotating inside the F(1) region and a stationary peripheral stalk. During catalysis, ATP synthesis in the catalytic domain of F(1) is coupled via a rotary mechanism of the central stalk subunits to proton translocation. In vivo, can only synthesize ATP although its ATP hydrolase activity can be activated artificially in vitro. Part of the complex F(0) domain. In Phoca vitulina (Harbor seal), this protein is ATP synthase F(0) complex subunit 8.